A 129-amino-acid polypeptide reads, in one-letter code: Glycine cleavage system H protein (129 aa).

Residues 24–106 (SYTVGITEHA…YGEGWFFRVM (83 aa)) enclose the Lipoyl-binding domain. At lysine 65 the chain carries N6-lipoyllysine.

Belongs to the GcvH family. The glycine cleavage system is composed of four proteins: P, T, L and H. It depends on (R)-lipoate as a cofactor.

Its function is as follows. The glycine cleavage system catalyzes the degradation of glycine. The H protein shuttles the methylamine group of glycine from the P protein to the T protein. The sequence is that of Glycine cleavage system H protein from Shewanella oneidensis (strain ATCC 700550 / JCM 31522 / CIP 106686 / LMG 19005 / NCIMB 14063 / MR-1).